Reading from the N-terminus, the 317-residue chain is tRNA dimethylallyltransferase (317 aa).

19-26 (GPTASGKS) serves as a coordination point for ATP. Residue 21-26 (TASGKS) participates in substrate binding. The interaction with substrate tRNA stretch occupies residues 44–47 (DSMQ).

Belongs to the IPP transferase family. As to quaternary structure, monomer. Requires Mg(2+) as cofactor.

It catalyses the reaction adenosine(37) in tRNA + dimethylallyl diphosphate = N(6)-dimethylallyladenosine(37) in tRNA + diphosphate. Its function is as follows. Catalyzes the transfer of a dimethylallyl group onto the adenine at position 37 in tRNAs that read codons beginning with uridine, leading to the formation of N6-(dimethylallyl)adenosine (i(6)A). The polypeptide is tRNA dimethylallyltransferase (Methylorubrum extorquens (strain CM4 / NCIMB 13688) (Methylobacterium extorquens)).